The chain runs to 290 residues: ATP synthase gamma chain (290 aa).

This sequence belongs to the ATPase gamma chain family. In terms of assembly, F-type ATPases have 2 components, CF(1) - the catalytic core - and CF(0) - the membrane proton channel. CF(1) has five subunits: alpha(3), beta(3), gamma(1), delta(1), epsilon(1). CF(0) has three main subunits: a, b and c.

It is found in the cell membrane. In terms of biological role, produces ATP from ADP in the presence of a proton gradient across the membrane. The gamma chain is believed to be important in regulating ATPase activity and the flow of protons through the CF(0) complex. This chain is ATP synthase gamma chain, found in Akkermansia muciniphila (strain ATCC BAA-835 / DSM 22959 / JCM 33894 / BCRC 81048 / CCUG 64013 / CIP 107961 / Muc).